The chain runs to 61 residues: Insect toxin BsIT1 (61 aa).

The 61-residue stretch at 1–61 (DGYILMRNGC…KHLNYHKKTC (61 aa)) folds into the LCN-type CS-alpha/beta domain. Disulfide bonds link Cys10–Cys61, Cys14–Cys35, Cys21–Cys42, and Cys25–Cys44.

This sequence belongs to the long (4 C-C) scorpion toxin superfamily. Sodium channel inhibitor family. Beta subfamily. As to expression, expressed by the venom gland.

It localises to the secreted. Depressant insect beta-toxins cause a transient contraction paralysis followed by a slow flaccid paralysis. They bind voltage-independently at site-4 of sodium channels (Nav) and shift the voltage of activation toward more negative potentials thereby affecting sodium channel activation and promoting spontaneous and repetitive firing. This toxin is active only on insects and causes a transient contraction paralysis followed by a slow flaccid paralysis. The polypeptide is Insect toxin BsIT1 (Hottentotta tamulus sindicus (Scorpion)).